Consider the following 424-residue polypeptide: GTPase Obg (424 aa).

The Obg domain maps to 1–158 (MFIDTAKIFV…RWIKLELKLL (158 aa)). The 173-residue stretch at 159 to 331 (ADVGLIGFPN…LMKEAARLLS (173 aa)) folds into the OBG-type G domain. Residues 165–172 (GFPNVGKS), 190–194 (FTTLK), 212–215 (DIPG), 282–285 (NKSD), and 312–314 (SAA) contribute to the GTP site. Mg(2+)-binding residues include Ser172 and Thr192. An OCT domain is found at 345–424 (RFIEEEKRFT…LNDFEFDFLL (80 aa)).

The protein belongs to the TRAFAC class OBG-HflX-like GTPase superfamily. OBG GTPase family. In terms of assembly, monomer. Mg(2+) serves as cofactor.

The protein localises to the cytoplasm. In terms of biological role, an essential GTPase which binds GTP, GDP and possibly (p)ppGpp with moderate affinity, with high nucleotide exchange rates and a fairly low GTP hydrolysis rate. Plays a role in control of the cell cycle, stress response, ribosome biogenesis and in those bacteria that undergo differentiation, in morphogenesis control. This chain is GTPase Obg, found in Clostridium botulinum (strain Okra / Type B1).